The sequence spans 337 residues: Glycerol-3-phosphate dehydrogenase [NAD(P)+] (337 aa).

4 residues coordinate NADPH: S17, Y18, H38, and K112. Sn-glycerol 3-phosphate-binding residues include K112, G141, and T143. NADPH is bound at residue A145. Sn-glycerol 3-phosphate contacts are provided by K197, D250, S260, R261, and N262. The active-site Proton acceptor is the K197. R261 contributes to the NADPH binding site. The NADPH site is built by V285 and E287.

Belongs to the NAD-dependent glycerol-3-phosphate dehydrogenase family.

The protein resides in the cytoplasm. It carries out the reaction sn-glycerol 3-phosphate + NAD(+) = dihydroxyacetone phosphate + NADH + H(+). It catalyses the reaction sn-glycerol 3-phosphate + NADP(+) = dihydroxyacetone phosphate + NADPH + H(+). It participates in membrane lipid metabolism; glycerophospholipid metabolism. Catalyzes the reduction of the glycolytic intermediate dihydroxyacetone phosphate (DHAP) to sn-glycerol 3-phosphate (G3P), the key precursor for phospholipid synthesis. This chain is Glycerol-3-phosphate dehydrogenase [NAD(P)+], found in Pasteurella multocida (strain Pm70).